Here is a 327-residue protein sequence, read N- to C-terminus: Malate dehydrogenase (327 aa).

11 to 17 (GAAGQIS) contacts NAD(+). Residues Arg92 and Arg98 each contribute to the substrate site. NAD(+) contacts are provided by residues Asn105, Gln112, and 129-131 (VGN). Residues Asn131 and Arg162 each contribute to the substrate site. His187 (proton acceptor) is an active-site residue.

It belongs to the LDH/MDH superfamily. MDH type 2 family.

It catalyses the reaction (S)-malate + NAD(+) = oxaloacetate + NADH + H(+). Catalyzes the reversible oxidation of malate to oxaloacetate. This chain is Malate dehydrogenase, found in Teredinibacter turnerae (strain ATCC 39867 / T7901).